A 770-amino-acid chain; its full sequence is Jhy protein (770 aa).

5 disordered regions span residues 1–249 (MNKY…SKQY), 295–438 (TVQN…SFVS), 493–527 (HRHESPSQRAPQSDHHMNTHRSTKTKKPAKQPQAE), 595–647 (ESQL…KRDV), and 708–740 (DYAKTIPKPKPPNLPDQTAKKTKNSRHSEKEGG). Residues 57-71 (SWSDIKDQIQDKDME) show a composition bias toward basic and acidic residues. Acidic residues predominate over residues 72-85 (PDSLEEDSPSETEE). Residues 112-134 (HQVEDKYSDLRYDPNWKNKREEG) are compositionally biased toward basic and acidic residues. Residues 218–229 (SGLSQYLKSSSS) show a composition bias toward low complexity. Positions 295 to 314 (TVQNDKEVENTFMDPEDKWH) are enriched in basic and acidic residues. The span at 340–354 (RGQSSDAANGQQPSR) shows a compositional bias: polar residues. The span at 355–370 (RTAKARVRKQRKHQKG) shows a compositional bias: basic residues. Residues 383–398 (QNNQNNPFQQPQNQRQ) are compositionally biased toward low complexity. Over residues 410 to 438 (AQTNASNPNLQDARTLTHNPKVTSDSFVS) the composition is skewed to polar residues. A compositionally biased stretch (basic and acidic residues) spans 493 to 509 (HRHESPSQRAPQSDHHM). Composition is skewed to basic residues over residues 510-521 (NTHRSTKTKKPA) and 625-642 (GKRHRKRSSTKSSKLKGY).

In terms of tissue distribution, expressed in the brain, specifically in hypothalamus, pineal gland, and ependymal cells of the aqueduct of Sylvius, as well as in the choroid plexus of the third ventricle. Expressed in the ependymal cells lining the lateral ventricles (at protein level).

Functionally, required for the normal development of cilia in brain ependymal cells lining the ventricular surfaces. This chain is Jhy protein, found in Mus musculus (Mouse).